Reading from the N-terminus, the 255-residue chain is Small ribosomal subunit protein uS2 (255 aa).

The segment at 226 to 255 is disordered; the sequence is QGVSNEEVAAEQNIDLDEKEKSEETEATEE.

The protein belongs to the universal ribosomal protein uS2 family.

The protein is Small ribosomal subunit protein uS2 of Staphylococcus aureus (strain Mu3 / ATCC 700698).